The following is a 187-amino-acid chain: Biogenesis of lysosome-related organelles complex 1 subunit 5 (187 aa).

The interval 1–26 is disordered; sequence MSGGGTETPVGCEAAPGGGSKKRDSL. Ser2 is modified (N-acetylserine). The stretch at 154-186 forms a coiled coil; it reads NKRAEVDEEHRKAMERLKEQYAEMEKDLAKFST.

The protein belongs to the BLOC1S5 family. As to quaternary structure, interacts with BLOC1S4, DTNBP1/BLOC1S7 and PI4K2A. Component of the biogenesis of lysosome-related organelles complex 1 (BLOC-1) composed of BLOC1S1, BLOC1S2, BLOC1S3, BLOC1S4, BLOC1S5, BLOC1S6, DTNBP1/BLOC1S7 and SNAPIN/BLOC1S8. Octamer composed of one copy each BLOC1S1, BLOC1S2, BLOC1S3, BLOC1S4, BLOC1S5, BLOC1S6, DTNBP1/BLOC1S7 and SNAPIN/BLOC1S8. The BLOC-1 complex associates with the AP-3 protein complex and membrane protein cargos. Interacts with BLOC1S6.

In terms of biological role, component of the BLOC-1 complex, a complex that is required for normal biogenesis of lysosome-related organelles (LRO), such as platelet dense granules and melanosomes. In concert with the AP-3 complex, the BLOC-1 complex is required to target membrane protein cargos into vesicles assembled at cell bodies for delivery into neurites and nerve terminals. The BLOC-1 complex, in association with SNARE proteins, is also proposed to be involved in neurite extension. Plays a role in intracellular vesicle trafficking. This Homo sapiens (Human) protein is Biogenesis of lysosome-related organelles complex 1 subunit 5.